The following is a 538-amino-acid chain: Guanine nucleotide-binding protein-like 3 (538 aa).

Positions 1 to 45 (MKRPKLKKASKRMTCHKRYKIQKKVREHHRKLRKEAKKRGHKKPK) are enriched in basic residues. The interval 1–125 (MKRPKLKKAS…KAKSGKQNPK (125 aa)) is disordered. The segment at 2-46 (KRPKLKKASKRMTCHKRYKIQKKVREHHRKLRKEAKKRGHKKPKK) is basic. Positions 54-95 (APFKEALLREAELRKQQLEELKQQQKLDRQKEQERKRKLEIS) form a coiled coil. The segment covering 59–94 (ALLREAELRKQQLEELKQQQKLDRQKEQERKRKLEI) has biased composition (basic and acidic residues). Lysine 79 is subject to N6-acetyllysine. Lysine 91 is covalently cross-linked (Glycyl lysine isopeptide (Lys-Gly) (interchain with G-Cter in SUMO2)). A phosphoserine mark is found at serine 95 and serine 101. Positions 95 to 110 (SPDDEQSNVETQEESD) are enriched in acidic residues. Basic residues predominate over residues 115 to 125 (KKAKSGKQNPK). The region spanning 129–307 (CQELKKVIEA…IIDSPCFIIS (179 aa)) is the CP-type G domain. Residue 176–179 (NKSD) participates in GTP binding. Residues lysine 177, lysine 248, lysine 262, and lysine 270 each participate in a glycyl lysine isopeptide (Lys-Gly) (interchain with G-Cter in SUMO2) cross-link. Residue 256–263 (GFPNVGKS) participates in GTP binding. The intermediate stretch occupies residues 277–451 (VGVSMGLTRS…HLTNKILFRS (175 aa)). 300–303 (DSPC) is a binding site for GTP. 2 stretches are compositionally biased toward basic and acidic residues: residues 460 to 473 (EEKDIPEESPKQTE) and 481 to 491 (QEHVTGEKNAE). The interval 460–532 (EEKDIPEESP…KMSEEDDAYD (73 aa)) is acidic. A disordered region spans residues 460-538 (EEKDIPEESP…DAYDFTTDYI (79 aa)). 3 positions are modified to phosphoserine: serine 493, serine 505, and serine 518. Over residues 514–524 (PSDRSFILDKM) the composition is skewed to basic and acidic residues.

It belongs to the TRAFAC class YlqF/YawG GTPase family. As to quaternary structure, interacts with MDM2; this interaction stabilizes MDM2. Interaction with MDM2 occurs in the nucleoplasm and is triggered by a nucleolar release mechanism, such as mitosis-induced nucleolar disassembly. May interact with p53/TP53 via its basic domain. This interaction is most probably indirect and mediated by MDM2-binding. Expressed in testis.

The protein localises to the nucleus. Its subcellular location is the nucleolus. May be required to maintain the proliferative capacity of stem cells. Stabilizes MDM2 by preventing its ubiquitination, and hence proteasomal degradation. This is Guanine nucleotide-binding protein-like 3 (Gnl3) from Rattus norvegicus (Rat).